Here is a 499-residue protein sequence, read N- to C-terminus: Ribulose bisphosphate carboxylase large chain (499 aa).

Residues asparagine 139 and threonine 189 each contribute to the substrate site. Residue lysine 191 is the Proton acceptor of the active site. Residue lysine 193 participates in substrate binding. Residues lysine 217, aspartate 219, and glutamate 220 each contribute to the Mg(2+) site. Lysine 217 is subject to N6-carboxylysine. Histidine 309 functions as the Proton acceptor in the catalytic mechanism. Substrate is bound by residues arginine 310, histidine 342, and serine 394.

Belongs to the RuBisCO large chain family. Type I subfamily. As to quaternary structure, heterohexadecamer of 8 large chains and 8 small chains. It depends on Mg(2+) as a cofactor.

The enzyme catalyses 2 (2R)-3-phosphoglycerate + 2 H(+) = D-ribulose 1,5-bisphosphate + CO2 + H2O. The catalysed reaction is D-ribulose 1,5-bisphosphate + O2 = 2-phosphoglycolate + (2R)-3-phosphoglycerate + 2 H(+). Its function is as follows. RuBisCO catalyzes two reactions: the carboxylation of D-ribulose 1,5-bisphosphate, the primary event in carbon dioxide fixation, as well as the oxidative fragmentation of the pentose substrate. Both reactions occur simultaneously and in competition at the same active site. This chain is Ribulose bisphosphate carboxylase large chain, found in Paraburkholderia xenovorans (strain LB400).